Consider the following 425-residue polypeptide: Tol-Pal system protein TolB (425 aa).

A signal peptide spans 1-25; sequence MTRKHILSFALMTALGMTVTSTAFA.

This sequence belongs to the TolB family. As to quaternary structure, the Tol-Pal system is composed of five core proteins: the inner membrane proteins TolA, TolQ and TolR, the periplasmic protein TolB and the outer membrane protein Pal. They form a network linking the inner and outer membranes and the peptidoglycan layer.

The protein resides in the periplasm. Part of the Tol-Pal system, which plays a role in outer membrane invagination during cell division and is important for maintaining outer membrane integrity. In Acinetobacter baylyi (strain ATCC 33305 / BD413 / ADP1), this protein is Tol-Pal system protein TolB.